We begin with the raw amino-acid sequence, 296 residues long: tRNA dimethylallyltransferase (296 aa).

11 to 18 is an ATP binding site; sequence GPTAVGKT. Substrate is bound at residue 13–18; it reads TAVGKT. Residues 36–39 form an interaction with substrate tRNA region; it reads DSQQ.

This sequence belongs to the IPP transferase family. As to quaternary structure, monomer. Mg(2+) is required as a cofactor.

It carries out the reaction adenosine(37) in tRNA + dimethylallyl diphosphate = N(6)-dimethylallyladenosine(37) in tRNA + diphosphate. Catalyzes the transfer of a dimethylallyl group onto the adenine at position 37 in tRNAs that read codons beginning with uridine, leading to the formation of N6-(dimethylallyl)adenosine (i(6)A). This is tRNA dimethylallyltransferase from Streptococcus equi subsp. zooepidemicus (strain H70).